The following is a 915-amino-acid chain: Alanine--tRNA ligase (915 aa).

Zn(2+) is bound by residues histidine 609, histidine 613, cysteine 712, and histidine 716.

This sequence belongs to the class-II aminoacyl-tRNA synthetase family. Requires Zn(2+) as cofactor.

The protein resides in the cytoplasm. It catalyses the reaction tRNA(Ala) + L-alanine + ATP = L-alanyl-tRNA(Ala) + AMP + diphosphate. Catalyzes the attachment of alanine to tRNA(Ala) in a two-step reaction: alanine is first activated by ATP to form Ala-AMP and then transferred to the acceptor end of tRNA(Ala). Also edits incorrectly charged Ser-tRNA(Ala) and Gly-tRNA(Ala) via its editing domain. The protein is Alanine--tRNA ligase of Methanoculleus marisnigri (strain ATCC 35101 / DSM 1498 / JR1).